A 696-amino-acid chain; its full sequence is Elongation factor G (696 aa).

The tr-type G domain maps to 8 to 286; sequence EDVRNIGIAA…AVVHYLPSPV (279 aa). Residues 17–24, 81–85, and 135–138 each bind GTP; these read AHIDAGKT, DTPGH, and NKMD.

It belongs to the TRAFAC class translation factor GTPase superfamily. Classic translation factor GTPase family. EF-G/EF-2 subfamily.

The protein localises to the cytoplasm. Its function is as follows. Catalyzes the GTP-dependent ribosomal translocation step during translation elongation. During this step, the ribosome changes from the pre-translocational (PRE) to the post-translocational (POST) state as the newly formed A-site-bound peptidyl-tRNA and P-site-bound deacylated tRNA move to the P and E sites, respectively. Catalyzes the coordinated movement of the two tRNA molecules, the mRNA and conformational changes in the ribosome. In Sulfurovum sp. (strain NBC37-1), this protein is Elongation factor G.